Reading from the N-terminus, the 298-residue chain is METSSNLSSMVRLNIGGKKFCTTIDTLTIREPDSMLAAMFSGRHAMCQESKKGYVFIDRDGKHFRHILNWLRDGVIPSLSDPDCSELLREADYYQLLGLKDGIKDSRKEVGEVEAELTRIDIIKCIQTERVRFRGVNLSGIDLSKLDLSLVDFSYACLRNVFFSRTNLQCAKFRNADAEGSIFHNAILRECEFTSANLRGALLAGTNLQSANLQDACLVGCSFCGADLRTAHLQNADLTNANLEGANLEGANLKGAKLSNANFKGANLQRAYLRHVNLREAHMEGANLGGANMTGAIR.

Positions 9-80 (SMVRLNIGGK…LRDGVIPSLS (72 aa)) constitute a BTB domain. 4 consecutive Pentapeptide repeat domains span residues 129–165 (ERVR…FFSR), 166–203 (TNLQ…GALL), 216–255 (ACLV…NLKG), and 256–295 (AKLS…NMTG).

As to quaternary structure, interacts with FH1. As to expression, expressed in all tissues but preferentially in roots and flowers.

Its pathway is protein modification; protein ubiquitination. May act as a substrate-specific adapter of an E3 ubiquitin-protein ligase complex (CUL3-RBX1-BTB) which mediates the ubiquitination and subsequent proteasomal degradation of target proteins. The chain is FH protein interacting protein FIP2 (FIP2) from Arabidopsis thaliana (Mouse-ear cress).